A 518-amino-acid chain; its full sequence is Laccase (518 aa).

An N-terminal signal peptide occupies residues 1–21; it reads MSRFQSLLSFVLVSLAAVANA. Plastocyanin-like domains are found at residues 23–148 and 160–302; these read IGPV…FVVY and IDND…ILRY. 2 N-linked (GlcNAc...) asparagine glycosylation sites follow: N72 and N75. Residues H85, H87, H130, and H132 each coordinate Cu cation. Intrachain disulfides connect C106/C507 and C138/C226. N-linked (GlcNAc...) asparagine glycosylation is present at N229. Residues 308–330 form a disordered region; the sequence is VEPTTTQTTSTKPLNEADLHPLT. N-linked (GlcNAc...) asparagine glycosylation is found at N354, N362, and N398. Positions 369–489 constitute a Plastocyanin-like 3 domain; sequence SVPVLLQILS…AGFAVVLAED (121 aa). 7 residues coordinate Cu cation: H416, H419, H421, H471, C472, H473, and H477.

It belongs to the multicopper oxidase family. Cu cation is required as a cofactor.

It is found in the secreted. It catalyses the reaction 4 hydroquinone + O2 = 4 benzosemiquinone + 2 H2O. Its function is as follows. Lignin degradation and detoxification of lignin-derived products. Cleaves the C-C and C-O bonds of some phenolic lignin model compounds (such as O- and P-quinols, aminophenols and phenylenediamine). May also be involved in synthesis of phenoxazinone pigments. This is Laccase (LCC3-1) from Pycnoporus cinnabarinus (Cinnabar-red polypore).